A 445-amino-acid polypeptide reads, in one-letter code: C4-dicarboxylate transport protein 2 (445 aa).

Transmembrane regions (helical) follow at residues 24-44, 62-82, 96-116, 163-183, 201-221, 237-257, 334-354, and 366-386; these read ILYV…WLFP, LIKM…IAHI, LVYF…VGNL, GDIL…MALG, FGVI…AMAF, LIAL…GLIA, ALGV…AMLT, and FITL…GMAI.

The protein belongs to the dicarboxylate/amino acid:cation symporter (DAACS) (TC 2.A.23) family.

Its subcellular location is the cell inner membrane. Its function is as follows. Responsible for the transport of dicarboxylates such as succinate, fumarate, and malate from the periplasm across the membrane. This chain is C4-dicarboxylate transport protein 2, found in Bradyrhizobium sp. (strain ORS 278).